Reading from the N-terminus, the 220-residue chain is Iron-sulfur cluster repair protein YtfE (220 aa).

Belongs to the RIC family. YtfE subfamily. In terms of assembly, homodimer.

The protein localises to the cytoplasm. Di-iron-containing protein involved in the repair of iron-sulfur clusters damaged by oxidative and nitrosative stress conditions. This chain is Iron-sulfur cluster repair protein YtfE, found in Salmonella typhimurium (strain LT2 / SGSC1412 / ATCC 700720).